A 264-amino-acid chain; its full sequence is MAVGKNKRLTKGGKKGAKKKVVDPFSKKDWYDVKAPAMFNIRNIGKTLVTRTQGTKIASDGLKGRVFEVSLADLQNDEVAFRKFKLITEDVQGKNCLTNFHGMDLTRDKMCSMVKKWQTMIEAHVDVKTTDGYLLRLFCVGFTKKRNNQIRKTSYAQHQQVRQIRKKMMEIMTREVQTNDLKEVVNKLIPDSIGKDIEKACQSIYPLHDVYVRKVKMLKKPKFELGKLMELHGEGGGAGKPSGDEAGTKVERADGYEPPVQESV.

Residues H232–V264 form a disordered region. Residues S242–G255 show a composition bias toward basic and acidic residues.

The protein belongs to the eukaryotic ribosomal protein eS1 family. As to quaternary structure, component of the small ribosomal subunit. Mature ribosomes consist of a small (40S) and a large (60S) subunit. The 40S subunit contains about 33 different proteins and 1 molecule of RNA (18S). The 60S subunit contains about 49 different proteins and 3 molecules of RNA (28S, 5.8S and 5S). Part of the small subunit (SSU) processome, composed of more than 70 proteins and the RNA chaperone small nucleolar RNA (snoRNA) U3.

It is found in the cytoplasm. It localises to the nucleus. The protein resides in the nucleolus. Functionally, component of the small ribosomal subunit. The ribosome is a large ribonucleoprotein complex responsible for the synthesis of proteins in the cell. Part of the small subunit (SSU) processome, first precursor of the small eukaryotic ribosomal subunit. During the assembly of the SSU processome in the nucleolus, many ribosome biogenesis factors, an RNA chaperone and ribosomal proteins associate with the nascent pre-rRNA and work in concert to generate RNA folding, modifications, rearrangements and cleavage as well as targeted degradation of pre-ribosomal RNA by the RNA exosome. May play a role during erythropoiesis. This is Small ribosomal subunit protein eS1 from Taeniopygia guttata (Zebra finch).